Here is a 157-residue protein sequence, read N- to C-terminus: Protein-export protein SecB (157 aa).

The protein belongs to the SecB family. As to quaternary structure, homotetramer, a dimer of dimers. One homotetramer interacts with 1 SecA dimer.

The protein resides in the cytoplasm. Functionally, one of the proteins required for the normal export of preproteins out of the cell cytoplasm. It is a molecular chaperone that binds to a subset of precursor proteins, maintaining them in a translocation-competent state. It also specifically binds to its receptor SecA. This Tolumonas auensis (strain DSM 9187 / NBRC 110442 / TA 4) protein is Protein-export protein SecB.